We begin with the raw amino-acid sequence, 284 residues long: Bifunctional protein FolD (284 aa).

NADP(+)-binding positions include 165–167, serine 190, and valine 231; that span reads GRS.

This sequence belongs to the tetrahydrofolate dehydrogenase/cyclohydrolase family. In terms of assembly, homodimer.

It catalyses the reaction (6R)-5,10-methylene-5,6,7,8-tetrahydrofolate + NADP(+) = (6R)-5,10-methenyltetrahydrofolate + NADPH. The enzyme catalyses (6R)-5,10-methenyltetrahydrofolate + H2O = (6R)-10-formyltetrahydrofolate + H(+). It participates in one-carbon metabolism; tetrahydrofolate interconversion. Catalyzes the oxidation of 5,10-methylenetetrahydrofolate to 5,10-methenyltetrahydrofolate and then the hydrolysis of 5,10-methenyltetrahydrofolate to 10-formyltetrahydrofolate. This is Bifunctional protein FolD from Natranaerobius thermophilus (strain ATCC BAA-1301 / DSM 18059 / JW/NM-WN-LF).